A 159-amino-acid polypeptide reads, in one-letter code: Large ribosomal subunit protein uL11 (159 aa).

The disordered stretch occupies residues 1–26; the sequence is MAGTIEVLVPGGKANPGPPLGPELGP.

It belongs to the universal ribosomal protein uL11 family. In terms of assembly, part of the ribosomal stalk of the 50S ribosomal subunit. Interacts with L10 and the large rRNA to form the base of the stalk. L10 forms an elongated spine to which L12 dimers bind in a sequential fashion forming a multimeric L10(L12)X complex.

Forms part of the ribosomal stalk which helps the ribosome interact with GTP-bound translation factors. This chain is Large ribosomal subunit protein uL11, found in Haloferax volcanii (strain ATCC 29605 / DSM 3757 / JCM 8879 / NBRC 14742 / NCIMB 2012 / VKM B-1768 / DS2) (Halobacterium volcanii).